A 427-amino-acid chain; its full sequence is 12-alpha,13-alpha-dihydroxyfumitremorgin C prenyltransferase (427 aa).

E94 provides a ligand contact to substrate. Dimethylallyl diphosphate-binding residues include R105, K192, Y194, Y268, Q353, Y355, Y419, and Y423.

Belongs to the tryptophan dimethylallyltransferase family.

The enzyme catalyses 12alpha,13alpha-dihydroxyfumitremorgin C + dimethylallyl diphosphate = fumitremorgin B + diphosphate. The protein operates within mycotoxin biosynthesis. Its function is as follows. 12-alpha,13-alpha-dihydroxyfumitremorgin C prenyltransferase; part of the gene cluster that mediates the biosynthesis of fumitremorgins, indole alkaloids that carry not only intriguing chemical structures, but also interesting biological and pharmacological activities. The biosynthesis of fumitremorgin-type alkaloids begins by condensation of the two amino acids L-tryptophan and L-proline to brevianamide F, catalyzed by the non-ribosomal peptide synthetase ftmA. Brevianamide F is then prenylated by the prenyltransferase ftmPT1/ftmB in the presence of dimethylallyl diphosphate, resulting in the formation of tryprostatin B. The three cytochrome P450 monooxygenases, ftmP450-1/ftmC, ftmP450-2/ftmE and ftmP450-3/FtmG, are responsible for the conversion of tryprostatin B to 6-hydroxytryprostatin B, tryprostatin A to fumitremorgin C and fumitremorgin C to 12,13-dihydroxyfumitremorgin C, respectively. The putative methyltransferase ftmMT/ftmD is expected for the conversion of 6-hydroxytryprostatin B to tryprostatin A. FtmPT2/FtmH catalyzes the prenylation of 12,13-dihydroxyfumitre-morgin C in the presence of dimethylallyl diphosphate, resulting in the formation of fumitremorgin B. Fumitremorgin B is further converted to verruculogen by ftmOx1/ftmF via the insertion of an endoperoxide bond between the two prenyl moieties. In some fungal species, verruculogen is further converted to fumitremorgin A, but the enzymes involved in this step have not been identified yet. This is 12-alpha,13-alpha-dihydroxyfumitremorgin C prenyltransferase from Aspergillus fumigatus (Neosartorya fumigata).